Reading from the N-terminus, the 101-residue chain is Small ribosomal subunit protein uS14 (101 aa).

The protein belongs to the universal ribosomal protein uS14 family. Part of the 30S ribosomal subunit. Contacts proteins S3 and S10.

In terms of biological role, binds 16S rRNA, required for the assembly of 30S particles and may also be responsible for determining the conformation of the 16S rRNA at the A site. This Blochmanniella pennsylvanica (strain BPEN) protein is Small ribosomal subunit protein uS14.